The chain runs to 158 residues: Lipoprotein signal peptidase (158 aa).

Helical transmembrane passes span 7–27 (LFWI…YWVV), 38–58 (LLTG…FSLL), 68–88 (LSLG…TLNL), and 92–112 (LGYG…FVLG). Catalysis depends on residues Asp116 and Asp132. The helical transmembrane segment at 125–145 (FPVFNVADSFISIGIVFLLIA) threads the bilayer.

Belongs to the peptidase A8 family.

The protein localises to the cell inner membrane. The catalysed reaction is Release of signal peptides from bacterial membrane prolipoproteins. Hydrolyzes -Xaa-Yaa-Zaa-|-(S,diacylglyceryl)Cys-, in which Xaa is hydrophobic (preferably Leu), and Yaa (Ala or Ser) and Zaa (Gly or Ala) have small, neutral side chains.. Its pathway is protein modification; lipoprotein biosynthesis (signal peptide cleavage). Its function is as follows. This protein specifically catalyzes the removal of signal peptides from prolipoproteins. In Nostoc punctiforme (strain ATCC 29133 / PCC 73102), this protein is Lipoprotein signal peptidase.